We begin with the raw amino-acid sequence, 284 residues long: UPF0276 protein PA3283 (284 aa).

Belongs to the UPF0276 family.

The protein is UPF0276 protein PA3283 of Pseudomonas aeruginosa (strain ATCC 15692 / DSM 22644 / CIP 104116 / JCM 14847 / LMG 12228 / 1C / PRS 101 / PAO1).